The sequence spans 99 residues: Integration host factor subunit alpha (99 aa).

The segment at 52 to 73 is disordered; the sequence is FGNFTLRDKPQRPGRNPKTGEE.

It belongs to the bacterial histone-like protein family. As to quaternary structure, heterodimer of an alpha and a beta chain.

Its function is as follows. This protein is one of the two subunits of integration host factor, a specific DNA-binding protein that functions in genetic recombination as well as in transcriptional and translational control. This is Integration host factor subunit alpha from Legionella pneumophila subsp. pneumophila (strain Philadelphia 1 / ATCC 33152 / DSM 7513).